Reading from the N-terminus, the 182-residue chain is Probable chorismate pyruvate-lyase (182 aa).

Residues Arg81, Leu119, and Glu171 each contribute to the substrate site.

The protein belongs to the UbiC family.

Its subcellular location is the cytoplasm. The enzyme catalyses chorismate = 4-hydroxybenzoate + pyruvate. Its pathway is cofactor biosynthesis; ubiquinone biosynthesis. Functionally, removes the pyruvyl group from chorismate, with concomitant aromatization of the ring, to provide 4-hydroxybenzoate (4HB) for the ubiquinone pathway. The chain is Probable chorismate pyruvate-lyase from Pseudomonas putida (Arthrobacter siderocapsulatus).